The sequence spans 173 residues: Inorganic pyrophosphatase (173 aa).

Residues Lys-28, Arg-42, and Tyr-54 each coordinate substrate. Mg(2+)-binding residues include Asp-64, Asp-69, and Asp-101. Tyr-140 is a substrate binding site.

This sequence belongs to the PPase family. In terms of assembly, homohexamer. It depends on Mg(2+) as a cofactor.

It is found in the cytoplasm. It carries out the reaction diphosphate + H2O = 2 phosphate + H(+). Functionally, catalyzes the hydrolysis of inorganic pyrophosphate (PPi) forming two phosphate ions. In Helicobacter pylori (strain ATCC 700392 / 26695) (Campylobacter pylori), this protein is Inorganic pyrophosphatase.